The primary structure comprises 446 residues: tRNA modification GTPase MnmE (446 aa).

Arg28, Glu85, and Lys124 together coordinate (6S)-5-formyl-5,6,7,8-tetrahydrofolate. Residues 220–372 (GLTVVLVGQP…LRAKLLQAAG (153 aa)) form the TrmE-type G domain. Asn230 is a binding site for K(+). Residues 230–235 (NVGKSS), 249–255 (TEIAGTT), and 274–277 (DTAG) contribute to the GTP site. Ser234 contributes to the Mg(2+) binding site. K(+) is bound by residues Thr249, Ile251, and Thr254. Thr255 is a binding site for Mg(2+). Lys446 contacts (6S)-5-formyl-5,6,7,8-tetrahydrofolate.

Belongs to the TRAFAC class TrmE-Era-EngA-EngB-Septin-like GTPase superfamily. TrmE GTPase family. In terms of assembly, homodimer. Heterotetramer of two MnmE and two MnmG subunits. K(+) is required as a cofactor.

The protein localises to the cytoplasm. Functionally, exhibits a very high intrinsic GTPase hydrolysis rate. Involved in the addition of a carboxymethylaminomethyl (cmnm) group at the wobble position (U34) of certain tRNAs, forming tRNA-cmnm(5)s(2)U34. This chain is tRNA modification GTPase MnmE, found in Thiobacillus denitrificans (strain ATCC 25259 / T1).